The chain runs to 38 residues: Photosystem II reaction center protein L (38 aa).

A helical transmembrane segment spans residues 17–37 (SLFWGLLLIFVLAVLFSSYFF).

This sequence belongs to the PsbL family. PSII is composed of 1 copy each of membrane proteins PsbA, PsbB, PsbC, PsbD, PsbE, PsbF, PsbH, PsbI, PsbJ, PsbK, PsbL, PsbM, PsbT, PsbX, PsbY, PsbZ, Psb30/Ycf12, at least 3 peripheral proteins of the oxygen-evolving complex and a large number of cofactors. It forms dimeric complexes.

It is found in the plastid. The protein localises to the chloroplast thylakoid membrane. Functionally, one of the components of the core complex of photosystem II (PSII). PSII is a light-driven water:plastoquinone oxidoreductase that uses light energy to abstract electrons from H(2)O, generating O(2) and a proton gradient subsequently used for ATP formation. It consists of a core antenna complex that captures photons, and an electron transfer chain that converts photonic excitation into a charge separation. This subunit is found at the monomer-monomer interface and is required for correct PSII assembly and/or dimerization. The polypeptide is Photosystem II reaction center protein L (Zygnema circumcarinatum (Green alga)).